A 77-amino-acid polypeptide reads, in one-letter code: Acyl carrier protein (77 aa).

The region spanning 1-76 (MATFDDVKAV…DVVNYIDNLK (76 aa)) is the Carrier domain. An O-(pantetheine 4'-phosphoryl)serine modification is found at Ser36.

This sequence belongs to the acyl carrier protein (ACP) family. In terms of processing, 4'-phosphopantetheine is transferred from CoA to a specific serine of apo-ACP by AcpS. This modification is essential for activity because fatty acids are bound in thioester linkage to the sulfhydryl of the prosthetic group.

The protein resides in the cytoplasm. Its pathway is lipid metabolism; fatty acid biosynthesis. In terms of biological role, carrier of the growing fatty acid chain in fatty acid biosynthesis. The chain is Acyl carrier protein from Campylobacter jejuni subsp. doylei (strain ATCC BAA-1458 / RM4099 / 269.97).